A 1001-amino-acid chain; its full sequence is Chloride channel protein clh-3 (1001 aa).

At 1–48 the chain is on the cytoplasmic side; it reads MGIGTKILSKIEKNKTSDGLTIPLTPTTQKQSSSWCSFESIKTFFRTV. 2 helical membrane-spanning segments follow: residues 49–85 and 91–117; these read IRDW…RLFD and HFTL…AHYI. Residues 123 to 127 carry the Selectivity filter part_1 motif; that stretch reads GSGIP. Ser-124 is a binding site for chloride. The segment at residues 126 to 133 is an intramembrane region (helical); the sequence is IPEMKTIL. 2 helical membrane-spanning segments follow: residues 142–160 and 167–185; these read LSVR…SLGS and EGPF…TRLV. Residues 165–169 carry the Selectivity filter part_2 motif; it reads GKEGP. Intramembrane regions (helical) lie at residues 202-214 and 218-226; these read MLAA…VACT and PIGGVLFSI. 5 helical membrane-spanning segments follow: residues 238-258, 285-313, 322-341, 405-425, and 433-456; these read YWRG…LRMF, LPIF…VLFL, IFQK…ISSL, YSPF…AILA, and GIFM…VFSL. The short motif at 433-437 is the Selectivity filter part_3 element; sequence GIFMP. Ile-434 and Phe-435 together coordinate chloride. An intramembrane region (helical) is located at residues 473–487; the sequence is GVYAVVGAAAFCGAV. Residues 488–489 constitute an intramembrane region (note=Loop between two helices); the sequence is TH. Residues 490–501 constitute an intramembrane region (helical); the sequence is TVSVAVIVFELT. The note=Loop between two helices intramembrane region spans 502 to 506; sequence GQLCH. The helical transmembrane segment at 507–524 threads the bilayer; sequence LLPVMIAVLIANAVASYL. Residues 525 to 1001 lie on the Cytoplasmic side of the membrane; it reads QPSIYDSIIR…LPDDVHDEKF (477 aa). Tyr-529 provides a ligand contact to chloride. The region spanning 560–619 is the CBS 1 domain; the sequence is MISPLVYIAKDSTVGDIKRALETKTRIRAFPLVENMESLALVGSVSRSQLQRYVDSQIGT. Positions 625–657 form a coiled coil; the sequence is EATRRIKQRLEDEESERKRREESKSDDTEDSLE. Residues 634-650 are compositionally biased toward basic and acidic residues; it reads LEDEESERKRREESKSD. The segment at 634 to 662 is disordered; the sequence is LEDEESERKRREESKSDDTEDSLETTGAG. Phosphoserine; by gck-3 occurs at positions 742 and 747. Residues 788–845 enclose the CBS 2 domain; the sequence is IDSTPFQLSEYTSLFKAHSLFSLLGLNRAYVTKKGQLIGVVALKELRLAIEYLQSGKV.

This sequence belongs to the chloride channel (TC 2.A.49) family. Isoform a interacts (via RFLI motif) with gck-3 (via C-terminus). Phosphorylated by gck-3; phosphorylation at both Ser-742 and Ser-747 is required to inhibit channel activity. Dephosphorylated by gsp-1/2 during cell swelling and oocyte meiotic maturation, which results in channel activation. Expressed in excretory cell, 4 anterior epithelial cells of the intestine, hermaphrodite-specific neurons and enteric muscles. Expressed also in vulva and uterus. Isoform a is expressed in oocytes (at protein level).

The protein localises to the cell membrane. Its function is as follows. Voltage-gated chloride channel. Insensitive to depolarizing conditioning voltages, requires low voltages for activation, insensitive to chloride levels and has a mild sensitivity to low pH. Channel gating properties are conferred by the cytoplasmic C-terminus. Plays a role in egg laying by modulating hermaphrodite-specific neurons (HSN) excitability and the ovulatory contractions of gap-junction-coupled gonadal sheath cells. When active, may prevent tubular formation of the excretory canals. Activated during oocyte meiotic maturation and by membrane hyperpolarization and cell swelling. Inhibited by Zn(2+) and to a lesser extent by Cd(2+). In terms of biological role, voltage-gated chloride channel. Sensitive to depolarizing conditioning voltages, requires stronger voltages for activation and activation is slower, is inhibited by low concentrations of chloride and is activated by low pH. Channel gating properties are conferred by the cytoplasmic C-terminus. This is Chloride channel protein clh-3 from Caenorhabditis elegans.